A 607-amino-acid chain; its full sequence is DNA mismatch repair protein MutL (607 aa).

The protein belongs to the DNA mismatch repair MutL/HexB family.

Functionally, this protein is involved in the repair of mismatches in DNA. It is required for dam-dependent methyl-directed DNA mismatch repair. May act as a 'molecular matchmaker', a protein that promotes the formation of a stable complex between two or more DNA-binding proteins in an ATP-dependent manner without itself being part of a final effector complex. This is DNA mismatch repair protein MutL from Paramagnetospirillum magneticum (strain ATCC 700264 / AMB-1) (Magnetospirillum magneticum).